We begin with the raw amino-acid sequence, 175 residues long: ATP-dependent protease subunit HslV (175 aa).

The active site involves threonine 2. Na(+) contacts are provided by glycine 158, cysteine 161, and threonine 164.

It belongs to the peptidase T1B family. HslV subfamily. A double ring-shaped homohexamer of HslV is capped on each side by a ring-shaped HslU homohexamer. The assembly of the HslU/HslV complex is dependent on binding of ATP.

Its subcellular location is the cytoplasm. The catalysed reaction is ATP-dependent cleavage of peptide bonds with broad specificity.. Its activity is regulated as follows. Allosterically activated by HslU binding. Protease subunit of a proteasome-like degradation complex believed to be a general protein degrading machinery. The sequence is that of ATP-dependent protease subunit HslV from Haemophilus influenzae (strain 86-028NP).